The chain runs to 315 residues: Ribosomal RNA small subunit methyltransferase H (315 aa).

The segment at 1-21 is disordered; the sequence is MNVVNVVPMHLPPPPPRPRGE. Residues 51-53, Asp69, Phe96, Asp117, and Gln124 contribute to the S-adenosyl-L-methionine site; that span reads GGH. A disordered region spans residues 281-315; that stretch reads KKPVTAGDDEVEGNPRARSAKLRAARRVGGAEALA.

This sequence belongs to the methyltransferase superfamily. RsmH family.

The protein localises to the cytoplasm. It catalyses the reaction cytidine(1402) in 16S rRNA + S-adenosyl-L-methionine = N(4)-methylcytidine(1402) in 16S rRNA + S-adenosyl-L-homocysteine + H(+). In terms of biological role, specifically methylates the N4 position of cytidine in position 1402 (C1402) of 16S rRNA. The polypeptide is Ribosomal RNA small subunit methyltransferase H (Sorangium cellulosum (strain So ce56) (Polyangium cellulosum (strain So ce56))).